The primary structure comprises 190 residues: dCTP deaminase (190 aa).

DCTP contacts are provided by residues 111–116 (KSTYAR), 135–137 (TLE), glutamine 156, tyrosine 172, and glutamine 182. The Proton donor/acceptor role is filled by glutamate 137.

The protein belongs to the dCTP deaminase family. As to quaternary structure, homotrimer.

The catalysed reaction is dCTP + H2O + H(+) = dUTP + NH4(+). Its pathway is pyrimidine metabolism; dUMP biosynthesis; dUMP from dCTP (dUTP route): step 1/2. In terms of biological role, catalyzes the deamination of dCTP to dUTP. The protein is dCTP deaminase of Stenotrophomonas maltophilia (strain R551-3).